We begin with the raw amino-acid sequence, 58 residues long: Large ribosomal subunit protein bL32 (58 aa).

Residues 1-15 show a composition bias toward basic residues; the sequence is MAVPKKKTSKAKRNQ. The tract at residues 1-23 is disordered; it reads MAVPKKKTSKAKRNQRSATWKGK.

This sequence belongs to the bacterial ribosomal protein bL32 family.

This Synechococcus sp. (strain CC9902) protein is Large ribosomal subunit protein bL32.